We begin with the raw amino-acid sequence, 384 residues long: MAP kinase-activated protein kinase 3 (384 aa).

An N-acetylmethionine modification is found at Met-1. The disordered stretch occupies residues Met-1–Pro-22. The Protein kinase domain occupies Gln-46 to Ile-306. ATP is bound by residues Leu-52–Val-60 and Lys-75. Asp-168 (proton acceptor) is an active-site residue. Thr-203 bears the Phosphothreonine; by MAPK14 mark. Position 253 is a phosphoserine; by MAPK14 (Ser-253). At Ser-309 the chain carries Phosphoserine; by autocatalysis. The tract at residues Ser-309 to Arg-345 is autoinhibitory helix. Thr-315 is modified (phosphothreonine; by MAPK14). Positions Met-337–Val-346 match the Nuclear export signal (NES) motif. The interval Asp-347 to Gln-371 is p38 MAPK-binding site. 2 short sequence motifs (bipartite nuclear localization signal) span residues Lys-352–Asp-355 and Lys-366–Lys-370. Residues Ser-359–Gln-384 are disordered. A compositionally biased stretch (low complexity) spans Gly-373 to Gln-384.

Belongs to the protein kinase superfamily. CAMK Ser/Thr protein kinase family. In terms of assembly, heterodimer with p38-alpha/MAPK14. The heterodimer with p38-alpha/MAPK14 forms a stable complex: molecules are positioned 'face to face' so that the ATP-binding sites of both kinases are at the heterodimer interface. Interacts with TCF3 and with polycomb proteins, such as PCH2 and BMI1/PCGF4. In terms of processing, phosphorylated and activated by MAPK1/ERK2 and MAPK3/ERK1. Phosphorylated and activated by MAP kinase p38-alpha/MAPK14 at Thr-203, Ser-253 and Thr-315.

The protein resides in the nucleus. Its subcellular location is the cytoplasm. It carries out the reaction L-seryl-[protein] + ATP = O-phospho-L-seryl-[protein] + ADP + H(+). The catalysed reaction is L-threonyl-[protein] + ATP = O-phospho-L-threonyl-[protein] + ADP + H(+). With respect to regulation, activated following phosphorylation by p38-alpha/MAPK14 following various stresses. Inhibited by ligand 5B (2'-[2-(1,3-benzodioxol-5-yl)pyrimidin-4-yl]-5',6'-dihydrospiro[piperidine-4,7'-pyrrolo[3,2-c]pyridin]- 4'(1'h)-one) and ligand P4O (2-[2-(2-fluorophenyl)pyridin-4-yl]-1,5,6,7-tetrahydro- 4h-pyrrolo[3,2-c]pyridin-4-one), 2 ATP-competitive inhibitors. Stress-activated serine/threonine-protein kinase involved in cytokines production, endocytosis, cell migration, chromatin remodeling and transcriptional regulation. Following stress, it is phosphorylated and activated by MAP kinase p38-alpha/MAPK14, leading to phosphorylation of substrates. Phosphorylates serine in the peptide sequence, Hyd-X-R-X(2)-S, where Hyd is a large hydrophobic residue. MAPKAPK2 and MAPKAPK3, share the same function and substrate specificity, but MAPKAPK3 kinase activity and level in protein expression are lower compared to MAPKAPK2. Phosphorylates HSP27/HSPB1, KRT18, KRT20, RCSD1, RPS6KA3, TAB3 and TTP/ZFP36. Mediates phosphorylation of HSP27/HSPB1 in response to stress, leading to dissociate HSP27/HSPB1 from large small heat-shock protein (sHsps) oligomers and impair their chaperone activities and ability to protect against oxidative stress effectively. Involved in inflammatory response by regulating tumor necrosis factor (TNF) and IL6 production post-transcriptionally: acts by phosphorylating AU-rich elements (AREs)-binding proteins, such as TTP/ZFP36, leading to regulate the stability and translation of TNF and IL6 mRNAs. Phosphorylation of TTP/ZFP36, a major post-transcriptional regulator of TNF, promotes its binding to 14-3-3 proteins and reduces its ARE mRNA affinity leading to inhibition of dependent degradation of ARE-containing transcript. Involved in toll-like receptor signaling pathway (TLR) in dendritic cells: required for acute TLR-induced macropinocytosis by phosphorylating and activating RPS6KA3. Also acts as a modulator of Polycomb-mediated repression. In Bos taurus (Bovine), this protein is MAP kinase-activated protein kinase 3 (MAPKAPK3).